A 301-amino-acid chain; its full sequence is Oxygen-dependent coproporphyrinogen-III oxidase (301 aa).

Residues 49-58 (VMVDGAVIEK) form an important for dimerization region. Residue serine 93 participates in substrate binding. The active-site Proton donor is histidine 107. Substrate-binding positions include 109–111 (NVR) and 259–261 (GGR). Residues 241 to 276 (YAEFNLVIDRGTKFGLQSGGRTESILISLPPRARWG) are important for dimerization.

It belongs to the aerobic coproporphyrinogen-III oxidase family. Homodimer.

It localises to the cytoplasm. The enzyme catalyses coproporphyrinogen III + O2 + 2 H(+) = protoporphyrinogen IX + 2 CO2 + 2 H2O. The protein operates within porphyrin-containing compound metabolism; protoporphyrin-IX biosynthesis; protoporphyrinogen-IX from coproporphyrinogen-III (O2 route): step 1/1. Involved in the heme biosynthesis. Catalyzes the aerobic oxidative decarboxylation of propionate groups of rings A and B of coproporphyrinogen-III to yield the vinyl groups in protoporphyrinogen-IX. The polypeptide is Oxygen-dependent coproporphyrinogen-III oxidase (Leishmania major).